Reading from the N-terminus, the 225-residue chain is Ribonuclease 3 (225 aa).

Residues Leu-7 to Asp-129 form the RNase III domain. Glu-42 is a Mg(2+) binding site. Asp-46 is a catalytic residue. Asp-115 and Glu-118 together coordinate Mg(2+). Glu-118 is an active-site residue. One can recognise a DRBM domain in the interval Asp-155 to Lys-225.

This sequence belongs to the ribonuclease III family. As to quaternary structure, homodimer. Requires Mg(2+) as cofactor.

It localises to the cytoplasm. It carries out the reaction Endonucleolytic cleavage to 5'-phosphomonoester.. In terms of biological role, digests double-stranded RNA. Involved in the processing of primary rRNA transcript to yield the immediate precursors to the large and small rRNAs (23S and 16S). Processes some mRNAs, and tRNAs when they are encoded in the rRNA operon. Processes pre-crRNA and tracrRNA of type II CRISPR loci if present in the organism. This is Ribonuclease 3 from Shewanella loihica (strain ATCC BAA-1088 / PV-4).